Reading from the N-terminus, the 94-residue chain is Co-chaperonin GroES (94 aa).

This sequence belongs to the GroES chaperonin family. In terms of assembly, heptamer of 7 subunits arranged in a ring. Interacts with the chaperonin GroEL.

Its subcellular location is the cytoplasm. In terms of biological role, together with the chaperonin GroEL, plays an essential role in assisting protein folding. The GroEL-GroES system forms a nano-cage that allows encapsulation of the non-native substrate proteins and provides a physical environment optimized to promote and accelerate protein folding. GroES binds to the apical surface of the GroEL ring, thereby capping the opening of the GroEL channel. This chain is Co-chaperonin GroES, found in Bacillus pumilus (strain SAFR-032).